A 216-amino-acid polypeptide reads, in one-letter code: Uracil phosphoribosyltransferase (216 aa).

5-phospho-alpha-D-ribose 1-diphosphate-binding positions include Arg85, Arg110, and 135 to 143; that span reads DPMVATGYS. Residues Ile200 and 205-207 contribute to the uracil site; that span reads GDA. Asp206 contributes to the 5-phospho-alpha-D-ribose 1-diphosphate binding site.

This sequence belongs to the UPRTase family. Mg(2+) serves as cofactor.

The catalysed reaction is UMP + diphosphate = 5-phospho-alpha-D-ribose 1-diphosphate + uracil. It functions in the pathway pyrimidine metabolism; UMP biosynthesis via salvage pathway; UMP from uracil: step 1/1. With respect to regulation, allosterically activated by GTP. Catalyzes the conversion of uracil and 5-phospho-alpha-D-ribose 1-diphosphate (PRPP) to UMP and diphosphate. This is Uracil phosphoribosyltransferase from Burkholderia cenocepacia (strain ATCC BAA-245 / DSM 16553 / LMG 16656 / NCTC 13227 / J2315 / CF5610) (Burkholderia cepacia (strain J2315)).